The sequence spans 105 residues: DRDAQTLTDERNDQGDGNFRYEFETSNGIYTQKTGTPGSEGQSNYQGSFRFPLEDGTIAEVTYIADENGFQPSSDLLPVGPPAPPHVQRLLEIAEDQRRQGITFD.

Residues 1-21 are disordered; the sequence is DRDAQTLTDERNDQGDGNFRY. The region spanning 16–81 is the Chitin-binding type R&amp;R domain; sequence DGNFRYEFET…PSSDLLPVGP (66 aa).

In terms of tissue distribution, arthrodial membrane.

The polypeptide is Cuticle protein AMP4 (Homarus americanus (American lobster)).